The primary structure comprises 606 residues: WD repeat-containing protein 1 (606 aa).

13 WD repeats span residues 4 to 45 (EIKK…LRNI), 48 to 87 (PAVA…IWDT), 93 to 135 (ILKY…LWDT), 138 to 176 (SVGE…FFEG), 180 to 218 (KFKF…IYDG), 224 to 263 (VCAL…IWDV), 270 to 306 (STFP…YLDK), 311 to 351 (KPLR…YWDS), 358 to 408 (SFSG…KLDV), 432 to 474 (LKDQ…VYSI), 480 to 518 (KDEG…VFSV), 523 to 561 (SENN…VWTL), and 566 to 604 (TKVK…EWTI). Residues Lys28, Lys81, Lys95, and Lys115 each carry the N6-acetyllysine modification. Residue Tyr238 is modified to Phosphotyrosine. Lys480 carries the N6-acetyllysine modification.

This sequence belongs to the WD repeat AIP1 family.

It localises to the cytoplasm. The protein resides in the cytoskeleton. Its subcellular location is the cell projection. It is found in the podosome. Functionally, induces disassembly of actin filaments in conjunction with ADF/cofilin family proteins. Enhances cofilin-mediated actin severing. Involved in cytokinesis. Involved in chemotactic cell migration by restricting lamellipodial membrane protrusions. Involved in myocardium sarcomere organization. Required for cardiomyocyte growth and maintenance. Involved in megakaryocyte maturation and platelet shedding. Required for the establishment of planar cell polarity (PCP) during follicular epithelium development and for cell shape changes during PCP; the function seems to implicate cooperation with CFL1 and/or DSTN/ADF. Involved in the generation/maintenance of cortical tension. Involved in assembly and maintenance of epithelial apical cell junctions and plays a role in the organization of the perijunctional actomyosin belt. This Rattus norvegicus (Rat) protein is WD repeat-containing protein 1 (Wdr1).